A 316-amino-acid chain; its full sequence is Acetaldehyde dehydrogenase (316 aa).

12–15 (SGNI) serves as a coordination point for NAD(+). The Acyl-thioester intermediate role is filled by Cys132. NAD(+) is bound by residues 163–171 (SAGPGTRAN) and Asn289.

It belongs to the acetaldehyde dehydrogenase family.

It carries out the reaction acetaldehyde + NAD(+) + CoA = acetyl-CoA + NADH + H(+). The sequence is that of Acetaldehyde dehydrogenase (bphG) from Bordetella avium (strain 197N).